A 585-amino-acid polypeptide reads, in one-letter code: 2-succinyl-5-enolpyruvyl-6-hydroxy-3-cyclohexene-1-carboxylate synthase (585 aa).

It belongs to the TPP enzyme family. MenD subfamily. Homodimer. The cofactor is Mg(2+). It depends on Mn(2+) as a cofactor. Thiamine diphosphate serves as cofactor.

It catalyses the reaction isochorismate + 2-oxoglutarate + H(+) = 5-enolpyruvoyl-6-hydroxy-2-succinyl-cyclohex-3-ene-1-carboxylate + CO2. It participates in quinol/quinone metabolism; 1,4-dihydroxy-2-naphthoate biosynthesis; 1,4-dihydroxy-2-naphthoate from chorismate: step 2/7. Its pathway is cofactor biosynthesis; phylloquinone biosynthesis. Its function is as follows. Catalyzes the thiamine diphosphate-dependent decarboxylation of 2-oxoglutarate and the subsequent addition of the resulting succinic semialdehyde-thiamine pyrophosphate anion to isochorismate to yield 2-succinyl-5-enolpyruvyl-6-hydroxy-3-cyclohexene-1-carboxylate (SEPHCHC). This chain is 2-succinyl-5-enolpyruvyl-6-hydroxy-3-cyclohexene-1-carboxylate synthase, found in Crocosphaera subtropica (strain ATCC 51142 / BH68) (Cyanothece sp. (strain ATCC 51142)).